A 237-amino-acid chain; its full sequence is D-aminoacyl-tRNA deacylase (237 aa).

Belongs to the DtdA deacylase family. In terms of assembly, monomer. The cofactor is Zn(2+).

It catalyses the reaction a D-aminoacyl-tRNA + H2O = a tRNA + a D-alpha-amino acid + H(+). The catalysed reaction is glycyl-tRNA(Ala) + H2O = tRNA(Ala) + glycine + H(+). Functionally, D-aminoacyl-tRNA deacylase with broad substrate specificity. By recycling D-aminoacyl-tRNA to D-amino acids and free tRNA molecules, this enzyme counteracts the toxicity associated with the formation of D-aminoacyl-tRNA entities in vivo. In Metallosphaera sedula (strain ATCC 51363 / DSM 5348 / JCM 9185 / NBRC 15509 / TH2), this protein is D-aminoacyl-tRNA deacylase.